Reading from the N-terminus, the 519-residue chain is MEGVLYKWTNYLSGWQPRWFLLCGGILSYYDSPEDAWKGCKGSIQMAVCEIQVHSVDNTRMDLIIPGEQYFYLKARSVAERQRWLVALGSAKACLTDSRTQKEKEFAENTENLKTKMSELRLYCDLLVQQVDKTKEVATAGVTDSEEGIDVGTLLKSTCNTFLKTLEECMQIANAAFTSELLYHTPPGSPQLAVLKSSKMKHPIIPIHNSLERSMELNSCENGSLSIEVNGDEEILMKTKSSLYLKSTEVDCSISSEENTDDNVTVQGEIMKEDGEENLESHDKDPAQPGSDSVCSPESPWEDNEEVIPTFFSTMNTSFSDIELLEDSGIPTEAFLASCYAVVPVLDKLGPTVFAPVKMDLVGNIKKVNQKYITNKEEFTTLQKIVLHEVEADVAQVRNSATEALLWLKRGLKFLKGFLTEVKNGEKDIQTALNNAYGKTLRQHHGWVVRGVFALALRAAPSYEDFVAALTIKEGDHQKEAFSAGMQRDLSLYLPAMEKQLAILDTLYEIHGLESDEVV.

The PH domain maps to 1–93 (MEGVLYKWTN…WLVALGSAKA (93 aa)). Thr-139 bears the Phosphothreonine mark. At Ser-145 the chain carries Phosphoserine. The residue at position 153 (Thr-153) is a Phosphothreonine. The interval 275–302 (GEENLESHDKDPAQPGSDSVCSPESPWE) is disordered. Positions 330-473 (IPTEAFLASC…EDFVAALTIK (144 aa)) are glycolipid transfer protein homology domain.

Homodimer. Interacts with ARF1; the interaction together with phosphatidylinositol 4-phosphate binding is required for FAPP2 GlcCer transfer ability.

Its subcellular location is the golgi apparatus. The protein localises to the trans-Golgi network membrane. The protein resides in the membrane. Cargo transport protein that is required for apical transport from the trans-Golgi network (TGN). Transports AQP2 from the trans-Golgi network (TGN) to sites of AQP2 phosphorylation. Mediates the non-vesicular transport of glucosylceramide (GlcCer) from the trans-Golgi network (TGN) to the plasma membrane and plays a pivotal role in the synthesis of complex glycosphingolipids. Binding of both phosphatidylinositol 4-phosphate (PIP) and ARF1 are essential for the GlcCer transfer ability. Also required for primary cilium formation, possibly by being involved in the transport of raft lipids to the apical membrane, and for membrane tubulation. This Mus musculus (Mouse) protein is Pleckstrin homology domain-containing family A member 8 (Plekha8).